We begin with the raw amino-acid sequence, 129 residues long: Small ribosomal subunit protein uS11 (129 aa).

This sequence belongs to the universal ribosomal protein uS11 family. Part of the 30S ribosomal subunit. Interacts with proteins S7 and S18. Binds to IF-3.

Located on the platform of the 30S subunit, it bridges several disparate RNA helices of the 16S rRNA. Forms part of the Shine-Dalgarno cleft in the 70S ribosome. This chain is Small ribosomal subunit protein uS11, found in Lawsonia intracellularis (strain PHE/MN1-00).